A 507-amino-acid chain; its full sequence is Transmembrane protein 184 homolog DDB_G0276041 (507 aa).

7 helical membrane-spanning segments follow: residues 13 to 33 (IVMLSIGSFFALGSIIIAVIL), 50 to 70 (IVRIIMIAPIYAIHSLLSLFF), 88 to 108 (AYVLYCFFKLLICFLGGEEAL), 141 to 161 (LGLVLQYAIIKPTLAIVAAIL), 179 to 199 (LWITVINNISVLIALYFLVMF), 222 to 242 (VVFFLFWQTVVITVLIWFDAL), and 260 to 280 (FLVCIEMFITSIAMGICFSYS). N-linked (GlcNAc...) asparagine glycosylation is found at asparagine 360, asparagine 375, asparagine 470, asparagine 473, asparagine 477, and asparagine 498. A disordered region spans residues 448–500 (NGASNNNNNNNNNNNNINNNNNNNSNNSNNNSNSQFESIDINSNSVNSNKNQS). Residues 451-500 (SNNNNNNNNNNNNINNNNNNNSNNSNNNSNSQFESIDINSNSVNSNKNQS) show a composition bias toward low complexity.

This sequence belongs to the TMEM184 family.

The protein resides in the cell membrane. Functionally, probable transporter. The protein is Transmembrane protein 184 homolog DDB_G0276041 (tmem184B) of Dictyostelium discoideum (Social amoeba).